Reading from the N-terminus, the 854-residue chain is Envelope glycoprotein gp160 (854 aa).

The first 20 residues, 1-20, serve as a signal peptide directing secretion; it reads MGRLLIKILIIAIGISIGIG. Residues 21–705 are Extracellular-facing; it reads NLYVTVFYGI…IILGLRFAWV (685 aa). Asn35 carries an N-linked (GlcNAc...) asparagine; by host glycan. A disulfide bond links Cys42 and Cys55. Residues Asn68, Asn115, Asn136, Asn153, Asn168, Asn182, and Asn199 are each glycosylated (N-linked (GlcNAc...) asparagine; by host). 5 cysteine pairs are disulfide-bonded: Cys99–Cys207, Cys106–Cys198, Cys111–Cys154, Cys220–Cys250, and Cys230–Cys242. The interval 111–153 is V1; sequence CVELNGTATTKATTTATTTMTTPCQNCSTEQIEGEMAEEPASN. The tract at residues 154-198 is V2; the sequence is CTFAIAGYQRDVKKNYSMTWYDQELVCNNKTGSEKGSKDCYMIHC. Residues Asn244, Asn255, Asn265, Asn271, Asn283, Asn295, Asn305, Asn355, Asn400, Asn409, Asn458, Asn472, and Asn478 are each glycosylated (N-linked (GlcNAc...) asparagine; by host). The V3 stretch occupies residues 300–332; sequence CRRPGNKTVLPVTIMAGLVFHSQKYNTRLKQAW. Cys300 and Cys333 are oxidised to a cystine. Intrachain disulfides connect Cys382–Cys457 and Cys389–Cys430. Positions 389 to 430 are V4; that stretch reads CKMDWFINYLNNRTEDAEGTNRTCDKGKPGPGPCVQRTYVAC. The interval 473 to 481 is V5; that stretch reads KSGPINVTL. A fusion peptide region spans residues 523–543; that stretch reads VPFVLGFLGFLGAAGTAMGAA. Residues 586–602 form an immunosuppression region; it reads LNARVTALEKYLEDQAR. 2 N-linked (GlcNAc...) asparagine; by host glycosylation sites follow: Asn630 and Asn646. Residues 633 to 672 adopt a coiled-coil conformation; the sequence is WLEWERQINALEGNITQLLEEAQNQESKNLDLYQKLDDWS. The MPER; binding to GalCer stretch occupies residues 667–688; that stretch reads KLDDWSGFWSWFSLSTWLGYVK. A helical transmembrane segment spans residues 706 to 726; the sequence is LWGCIRNIRQGYNPLPQIHIH. A YXXL motif; contains endocytosis signal motif is present at residues 717–720; it reads YNPL. Residues 727–854 are Cytoplasmic-facing; the sequence is SSAERPDNGG…VRQGLEKVLG (128 aa).

In terms of assembly, the mature envelope protein (Env) consists of a homotrimer of non-covalently associated gp120-gp41 heterodimers. The resulting complex protrudes from the virus surface as a spike. Interacts with host CD4 and CCR5. Gp120 also interacts with the C-type lectins CD209/DC-SIGN and CLEC4M/DC-SIGNR (collectively referred to as DC-SIGN(R)). The mature envelope protein (Env) consists of a homotrimer of non-covalently associated gp120-gp41 heterodimers. The resulting complex protrudes from the virus surface as a spike. Specific enzymatic cleavages in vivo yield mature proteins. Envelope glycoproteins are synthesized as an inactive precursor that is heavily N-glycosylated and processed likely by host cell furin in the Golgi to yield the mature SU and TM proteins. The cleavage site between SU and TM requires the minimal sequence [KR]-X-[KR]-R.

It is found in the virion membrane. The protein localises to the host cell membrane. Its subcellular location is the host endosome membrane. The surface protein gp120 (SU) attaches the virus to the host lymphoid cell by binding to the primary receptor CD4. This interaction induces a structural rearrangement creating a high affinity binding site for a chemokine coreceptor like CCR5. This peculiar 2 stage receptor-interaction strategy allows gp120 to maintain the highly conserved coreceptor-binding site in a cryptic conformation, protected from neutralizing antibodies. These changes are transmitted to the transmembrane protein gp41 and are thought to activate its fusogenic potential by unmasking its fusion peptide. Functionally, surface protein gp120 (SU) may target the virus to gut-associated lymphoid tissue (GALT) by binding host ITGA4/ITGB7 (alpha-4/beta-7 integrins), a complex that mediates T-cell migration to the GALT. Interaction between gp120 and ITGA4/ITGB7 would allow the virus to enter GALT early in the infection, infecting and killing most of GALT's resting CD4+ T-cells. This T-cell depletion is believed to be the major insult to the host immune system leading to AIDS. In terms of biological role, the surface protein gp120 is a ligand for CD209/DC-SIGN and CLEC4M/DC-SIGNR, which are respectively found on dendritic cells (DCs), and on endothelial cells of liver sinusoids and lymph node sinuses. These interactions allow capture of viral particles at mucosal surfaces by these cells and subsequent transmission to permissive cells. DCs are professional antigen presenting cells, critical for host immunity by inducing specific immune responses against a broad variety of pathogens. They act as sentinels in various tissues where they take up antigen, process it, and present it to T-cells following migration to lymphoid organs. SIV subverts the migration properties of dendritic cells to gain access to CD4+ T-cells in lymph nodes. Virus transmission to permissive T-cells occurs either in trans (without DCs infection, through viral capture and transmission), or in cis (following DCs productive infection, through the usual CD4-gp120 interaction), thereby inducing a robust infection. In trans infection, bound virions remain infectious over days and it is proposed that they are not degraded, but protected in non-lysosomal acidic organelles within the DCs close to the cell membrane thus contributing to the viral infectious potential during DCs' migration from the periphery to the lymphoid tissues. On arrival at lymphoid tissues, intact virions recycle back to DCs' cell surface allowing virus transmission to CD4+ T-cells. Virion capture also seems to lead to MHC-II-restricted viral antigen presentation, and probably to the activation of SIV-specific CD4+ cells. Its function is as follows. The transmembrane protein gp41 (TM) acts as a class I viral fusion protein. Under the current model, the protein has at least 3 conformational states: pre-fusion native state, pre-hairpin intermediate state, and post-fusion hairpin state. During fusion of viral and target intracellular membranes, the coiled coil regions (heptad repeats) assume a trimer-of-hairpins structure, positioning the fusion peptide in close proximity to the C-terminal region of the ectodomain. The formation of this structure appears to drive apposition and subsequent fusion of viral and target cell membranes. Complete fusion occurs in host cell endosomes. The virus undergoes clathrin-dependent internalization long before endosomal fusion, thus minimizing the surface exposure of conserved viral epitopes during fusion and reducing the efficacy of inhibitors targeting these epitopes. Membranes fusion leads to delivery of the nucleocapsid into the cytoplasm. The envelope glycoprotein gp160 precursor down-modulates cell surface CD4 antigen by interacting with it in the endoplasmic reticulum and blocking its transport to the cell surface. Functionally, the gp120-gp41 heterodimer allows rapid transcytosis of the virus through CD4 negative cells such as simple epithelial monolayers of the intestinal, rectal and endocervical epithelial barriers. Both gp120 and gp41 specifically recognize glycosphingolipids galactosyl-ceramide (GalCer) or 3' sulfo-galactosyl-ceramide (GalS) present in the lipid rafts structures of epithelial cells. Binding to these alternative receptors allows the rapid transcytosis of the virus through the epithelial cells. This transcytotic vesicle-mediated transport of virions from the apical side to the basolateral side of the epithelial cells does not involve infection of the cells themselves. This chain is Envelope glycoprotein gp160 (env), found in Cercopithecidae (Old World monkeys).